A 168-amino-acid chain; its full sequence is Chorismate pyruvate-lyase (168 aa).

Substrate-binding residues include Met36, Arg78, Leu116, and Glu157.

This sequence belongs to the UbiC family. In terms of assembly, monomer.

The protein resides in the cytoplasm. The catalysed reaction is chorismate = 4-hydroxybenzoate + pyruvate. It functions in the pathway cofactor biosynthesis; ubiquinone biosynthesis. Functionally, removes the pyruvyl group from chorismate, with concomitant aromatization of the ring, to provide 4-hydroxybenzoate (4HB) for the ubiquinone pathway. In Yersinia enterocolitica serotype O:8 / biotype 1B (strain NCTC 13174 / 8081), this protein is Chorismate pyruvate-lyase.